A 406-amino-acid polypeptide reads, in one-letter code: Tyrosine--tRNA ligase (406 aa).

Residue tyrosine 35 coordinates L-tyrosine. The short motif at proline 40–histidine 49 is the 'HIGH' region element. The L-tyrosine site is built by tyrosine 168 and glutamine 172. The 'KMSKS' region motif lies at lysine 228–threonine 232. Lysine 231 provides a ligand contact to ATP. One can recognise an S4 RNA-binding domain in the interval serine 340–glutamate 404.

This sequence belongs to the class-I aminoacyl-tRNA synthetase family. TyrS type 1 subfamily. In terms of assembly, homodimer.

It is found in the cytoplasm. It carries out the reaction tRNA(Tyr) + L-tyrosine + ATP = L-tyrosyl-tRNA(Tyr) + AMP + diphosphate + H(+). Functionally, catalyzes the attachment of tyrosine to tRNA(Tyr) in a two-step reaction: tyrosine is first activated by ATP to form Tyr-AMP and then transferred to the acceptor end of tRNA(Tyr). The sequence is that of Tyrosine--tRNA ligase from Clostridium botulinum (strain Alaska E43 / Type E3).